The chain runs to 339 residues: Agamous-like MADS-box protein AGL86 (339 aa).

In terms of domain architecture, MADS-box spans methionine 1–glutamate 60. Positions threonine 86–arginine 112 form a coiled coil.

In terms of assembly, interacts with AGL61/DIANA and AGL62.

Its subcellular location is the nucleus. Probable transcription factor. This is Agamous-like MADS-box protein AGL86 (AGL86) from Arabidopsis thaliana (Mouse-ear cress).